We begin with the raw amino-acid sequence, 250 residues long: NAD(P)H-quinone oxidoreductase subunit K (250 aa).

4 residues coordinate [4Fe-4S] cluster: Cys-60, Cys-61, Cys-125, and Cys-156. The disordered stretch occupies residues 230-250 (ELNTPEIDVSPASQSSSTYES). A compositionally biased stretch (polar residues) spans 240–250 (PASQSSSTYES).

Belongs to the complex I 20 kDa subunit family. In terms of assembly, NDH-1 can be composed of about 15 different subunits; different subcomplexes with different compositions have been identified which probably have different functions. [4Fe-4S] cluster is required as a cofactor.

It is found in the cellular thylakoid membrane. It catalyses the reaction a plastoquinone + NADH + (n+1) H(+)(in) = a plastoquinol + NAD(+) + n H(+)(out). It carries out the reaction a plastoquinone + NADPH + (n+1) H(+)(in) = a plastoquinol + NADP(+) + n H(+)(out). Functionally, NDH-1 shuttles electrons from an unknown electron donor, via FMN and iron-sulfur (Fe-S) centers, to quinones in the respiratory and/or the photosynthetic chain. The immediate electron acceptor for the enzyme in this species is believed to be plastoquinone. Couples the redox reaction to proton translocation, and thus conserves the redox energy in a proton gradient. Cyanobacterial NDH-1 also plays a role in inorganic carbon-concentration. The protein is NAD(P)H-quinone oxidoreductase subunit K of Prochlorococcus marinus (strain MIT 9313).